Consider the following 172-residue polypeptide: MAKLTILVALALFLLAAHASARQQWELQGDRRCQSQLERANLRPCEQHLMQKIQRDEDSYGRDPYSPSQDPYSPSQDPDRRDPYSPSPYDRRGAGSSQHQERCCNELNEFENNQRCMCEALQQIMENQSDRLQGRQQEQQFKRELRNLPQQCGLRAPQRCDLEVESGGRDRY.

The signal sequence occupies residues 1–21 (MAKLTILVALALFLLAAHASA). 4 disulfides stabilise this stretch: Cys-33–Cys-116, Cys-45–Cys-103, Cys-104–Cys-152, and Cys-118–Cys-160. The segment at 54 to 98 (QRDEDSYGRDPYSPSQDPYSPSQDPDRRDPYSPSPYDRRGAGSSQ) is disordered. A compositionally biased stretch (low complexity) spans 62-76 (RDPYSPSQDPYSPSQ). Residues Pro-67, Pro-74, and Pro-86 each carry the 4-hydroxyproline modification. The span at 77-98 (DPDRRDPYSPSPYDRRGAGSSQ) shows a compositional bias: basic and acidic residues.

The protein belongs to the 2S seed storage albumins family. In terms of processing, the hydroxyproline modifications determined by mass spectrometry are probably 4-hydroxyproline as determined for other extracellular plant proteins. Expressed in seeds, not expressed in leaves, roots and pegs.

Its function is as follows. Weak inhibitor of trypsin. In Arachis hypogaea (Peanut), this protein is Conglutin-7.